The sequence spans 389 residues: Phospho-N-acetylmuramoyl-pentapeptide-transferase (389 aa).

The next 10 membrane-spanning stretches (helical) occupy residues 25–45, 73–93, 97–117, 135–155, 190–210, 222–242, 258–278, 286–306, 311–331, and 366–386; these read RAVM…PWVI, TMGG…WGDL, FIWI…VDDY, FWQS…VSEA, ISYP…IVGA, GLVI…AYVM, GAGE…AFLW, VFMG…VAVI, IVLF…MLQV, and QVVV…LSTL.

It belongs to the glycosyltransferase 4 family. MraY subfamily. Mg(2+) is required as a cofactor.

It is found in the cell inner membrane. It carries out the reaction UDP-N-acetyl-alpha-D-muramoyl-L-alanyl-gamma-D-glutamyl-meso-2,6-diaminopimeloyl-D-alanyl-D-alanine + di-trans,octa-cis-undecaprenyl phosphate = di-trans,octa-cis-undecaprenyl diphospho-N-acetyl-alpha-D-muramoyl-L-alanyl-D-glutamyl-meso-2,6-diaminopimeloyl-D-alanyl-D-alanine + UMP. It functions in the pathway cell wall biogenesis; peptidoglycan biosynthesis. Its function is as follows. Catalyzes the initial step of the lipid cycle reactions in the biosynthesis of the cell wall peptidoglycan: transfers peptidoglycan precursor phospho-MurNAc-pentapeptide from UDP-MurNAc-pentapeptide onto the lipid carrier undecaprenyl phosphate, yielding undecaprenyl-pyrophosphoryl-MurNAc-pentapeptide, known as lipid I. This is Phospho-N-acetylmuramoyl-pentapeptide-transferase from Burkholderia vietnamiensis (strain G4 / LMG 22486) (Burkholderia cepacia (strain R1808)).